The chain runs to 237 residues: D-aminoacyl-tRNA deacylase (237 aa).

This sequence belongs to the DtdA deacylase family. In terms of assembly, monomer. Zn(2+) serves as cofactor.

The catalysed reaction is a D-aminoacyl-tRNA + H2O = a tRNA + a D-alpha-amino acid + H(+). It carries out the reaction glycyl-tRNA(Ala) + H2O = tRNA(Ala) + glycine + H(+). In terms of biological role, D-aminoacyl-tRNA deacylase with broad substrate specificity. By recycling D-aminoacyl-tRNA to D-amino acids and free tRNA molecules, this enzyme counteracts the toxicity associated with the formation of D-aminoacyl-tRNA entities in vivo. This is D-aminoacyl-tRNA deacylase from Metallosphaera sedula (strain ATCC 51363 / DSM 5348 / JCM 9185 / NBRC 15509 / TH2).